Consider the following 271-residue polypeptide: Large ribosomal subunit protein eL8 (271 aa).

This sequence belongs to the eukaryotic ribosomal protein eL8 family.

The protein is Large ribosomal subunit protein eL8 (RpL7A) of Drosophila melanogaster (Fruit fly).